A 281-amino-acid chain; its full sequence is MGAIMLDGKATRDEIFGDLKPRVAALDAAGRTPGLGTILVGDDPGSQAYVRGKHADCAKVGITSIRRDLPADISTATLNETIDELNANPDCTGYIVQLPLPKHLDENAALERVDPAKDADGLHPTNLGRLVLGTPAPLPCTPRGIVHLLRRYDISIAGAHVVVIGRGVTVGRPLGLLLTRRSENATVTLCHTGTRDLPALTRQADIVVAAVGVAHLLTADMVRPGAAVIDVGVSRTDDGLVGDVHPDVWELAGHVSPNPGGVGPLTRAFLLTNVVELAERR.

Residues 165 to 167 (GRG), T192, and V233 each bind NADP(+).

Belongs to the tetrahydrofolate dehydrogenase/cyclohydrolase family. In terms of assembly, homodimer.

It carries out the reaction (6R)-5,10-methylene-5,6,7,8-tetrahydrofolate + NADP(+) = (6R)-5,10-methenyltetrahydrofolate + NADPH. The catalysed reaction is (6R)-5,10-methenyltetrahydrofolate + H2O = (6R)-10-formyltetrahydrofolate + H(+). It functions in the pathway one-carbon metabolism; tetrahydrofolate interconversion. Catalyzes the oxidation of 5,10-methylenetetrahydrofolate to 5,10-methenyltetrahydrofolate and then the hydrolysis of 5,10-methenyltetrahydrofolate to 10-formyltetrahydrofolate. The sequence is that of Bifunctional protein FolD from Mycobacterium bovis (strain BCG / Tokyo 172 / ATCC 35737 / TMC 1019).